The primary structure comprises 440 residues: Thymidine phosphorylase (440 aa).

Belongs to the thymidine/pyrimidine-nucleoside phosphorylase family. In terms of assembly, homodimer.

It catalyses the reaction thymidine + phosphate = 2-deoxy-alpha-D-ribose 1-phosphate + thymine. Its pathway is pyrimidine metabolism; dTMP biosynthesis via salvage pathway; dTMP from thymine: step 1/2. In terms of biological role, the enzymes which catalyze the reversible phosphorolysis of pyrimidine nucleosides are involved in the degradation of these compounds and in their utilization as carbon and energy sources, or in the rescue of pyrimidine bases for nucleotide synthesis. This is Thymidine phosphorylase from Salmonella paratyphi A (strain ATCC 9150 / SARB42).